The primary structure comprises 320 residues: GTP 3',8-cyclase (320 aa).

Residues 5-225 (QFDRKINYLR…IQLIKKDEKA (221 aa)) form the Radical SAM core domain. A GTP-binding site is contributed by Arg-14. [4Fe-4S] cluster is bound by residues Cys-21 and Cys-25. Tyr-27 provides a ligand contact to S-adenosyl-L-methionine. Cys-28 contributes to the [4Fe-4S] cluster binding site. Residue Arg-64 participates in GTP binding. Position 68 (Gly-68) interacts with S-adenosyl-L-methionine. Residue Thr-95 participates in GTP binding. Ser-119 is a binding site for S-adenosyl-L-methionine. Lys-155 serves as a coordination point for GTP. An S-adenosyl-L-methionine-binding site is contributed by Met-189. 2 residues coordinate [4Fe-4S] cluster: Cys-248 and Cys-251. 253–255 (RIR) lines the GTP pocket. Cys-265 is a [4Fe-4S] cluster binding site.

This sequence belongs to the radical SAM superfamily. MoaA family. Monomer and homodimer. [4Fe-4S] cluster serves as cofactor.

The enzyme catalyses GTP + AH2 + S-adenosyl-L-methionine = (8S)-3',8-cyclo-7,8-dihydroguanosine 5'-triphosphate + 5'-deoxyadenosine + L-methionine + A + H(+). It functions in the pathway cofactor biosynthesis; molybdopterin biosynthesis. Functionally, catalyzes the cyclization of GTP to (8S)-3',8-cyclo-7,8-dihydroguanosine 5'-triphosphate. The sequence is that of GTP 3',8-cyclase from Campylobacter jejuni subsp. doylei (strain ATCC BAA-1458 / RM4099 / 269.97).